Reading from the N-terminus, the 94-residue chain is ESAT-6-like protein EsxI (94 aa).

Belongs to the WXG100 family. ESAT-6 subfamily.

Its subcellular location is the secreted. The chain is ESAT-6-like protein EsxI from Mycobacterium tuberculosis (strain ATCC 25618 / H37Rv).